The following is a 2034-amino-acid chain: Host cell factor 1 (2034 aa).

An N-acetylalanine modification is found at A2. At S6 the chain carries Phosphoserine. Kelch repeat units lie at residues 44–89 (LIVV…GFVC), 93–140 (RLLV…RLGH), 148–194 (KCYL…ITYG), 217–265 (KLVI…TIGN), and 266–313 (KMYV…LMDT). Glycyl lysine isopeptide (Lys-Gly) (interchain with G-Cter in ubiquitin) cross-links involve residues K105, K163, and K244. Residue K282 forms a Glycyl lysine isopeptide (Lys-Gly) (interchain with G-Cter in SUMO2) linkage. K288 bears the N6-acetyllysine mark. Residue K363 forms a Glycyl lysine isopeptide (Lys-Gly) (interchain with G-Cter in ubiquitin) linkage. One can recognise a Fibronectin type-III 1 domain in the interval 366–469 (PPARVQLVRA…TIQVLPTVPG (104 aa)). The tract at residues 407-434 (ATATSPTPNPVPSVPANPPKSPAPAAAA) is disordered. At S411 the chain carries Phosphoserine. Positions 413 to 428 (TPNPVPSVPANPPKSP) are enriched in pro residues. The segment at 500–550 (LVTMRPASQAGKAPVTVTSLPASVRMVVPTQSAQGTVIGSNPQMSGMAALA) is required for interaction with OGT. Omega-N-methylarginine is present on residues R504 and R524. Residues S598, S666, and S669 each carry the phosphoserine modification. The interval 610-722 (LKTAAAQVGT…KGPLPAGTIL (113 aa)) is interaction with SIN3A. The segment at 750–902 (ILGISSVSPS…SLAGAGAHST (153 aa)) is interaction with ZBTB17. N6-acetyllysine is present on K813. Positions 813 to 912 (KIITAVPKIA…SASLATPITT (100 aa)) are interaction with GABP2. 3 HCF repeat repeats span residues 1010 to 1035 (TLVCSNPPCETHETGTTNTATTTVVA), 1072 to 1097 (VRVCSNPPCETHETGTTNTATTATSN), and 1101 to 1126 (QHGCSNPPCETHETGTTSTATTAMSS). Residues 1156–1182 (RAQGTVKPPCQTQQTNMTSTTMTVQAT) form an HCF repeat 4; degenerate repeat. Residues S1204 and S1223 each carry the phosphoserine modification. Disordered stretches follow at residues 1221-1241 (GPSSKDVPTGRQPETYHTYTT), 1302-1374 (PCET…TTST), 1444-1477 (TVTSNMSSNQDPPPAASDQGEVASTQGDSTNITS), and 1491-1525 (RAVTTVTQSTPVPGPSVPPPEELQVSPGPRQQLPP). 2 HCF repeat repeats span residues 1295–1320 (TQVCSNPPCETHETGTTNTATTSNAG) and 1323–1348 (QRVCSNPPCETHETGTTHTATTATSN). Low complexity predominate over residues 1308-1321 (TGTTNTATTSNAGS). One copy of the HCF repeat 7; degenerate repeat lies at 1358-1383 (QQPASGHPCETHQTTSTGTTMSVSVG). Residues 1423–1448 (QRVCSNPPCETHETGTTHTATTVTSN) form an HCF repeat 8 repeat. Residues 1491–1501 (RAVTTVTQSTP) are compositionally biased toward low complexity. The residue at position 1500 (T1500) is a Phosphothreonine. A compositionally biased stretch (pro residues) spans 1502-1511 (VPGPSVPPPE). Phosphoserine occurs at positions 1506 and 1516. Residues 1693 to 1723 (IVLTQQELAALVQQQQQLQEAQAQAQQQHHL) adopt a coiled-coil conformation. S1782 carries the post-translational modification Phosphoserine. 2 Fibronectin type-III domains span residues 1808–1899 (LPPP…TCLP) and 1901–2017 (FPGA…TSKD). Glycyl lysine isopeptide (Lys-Gly) (interchain with G-Cter in ubiquitin) cross-links involve residues K1818 and K1819. A Phosphoserine modification is found at S1849. Residues 2005-2034 (ATQVRWLQETSKDSSGTKPASKRPMSSPEM) are disordered. Position 2016 is an N6-acetyllysine (K2016).

Composed predominantly of six polypeptides ranging from 110 to 150 kDa and a minor 300 kDa polypeptide. The majority of N- and C-terminal cleavage products remain tightly, albeit non-covalently, associated. Interacts with POU2F1, CREB3, ZBTB17, EGR2, E2F4, CREBZF, SP1, GABP2, Sin3 HDAC complex (SIN3A, HDAC1, HDAC2, SUDS3), SAP30, SIN3B and FHL2. Component of a MLL1 complex, composed of at least the core components KMT2A/MLL1, ASH2L, HCFC1, WDR5 and RBBP5, as well as the facultative components BACC1, CHD8, DPY30, E2F6, HCFC2, HSP70, INO80C, KANSL1, LAS1L, MAX, MCRS1, MEN1, MGA, KAT8, PELP1, PHF20, PRP31, RING2, RUVBL1, RUVBL2, SENP3, TAF1, TAF4, TAF6, TAF7, TAF9 and TEX10. Component of a THAP1/THAP3-HCFC1-OGT complex that is required for the regulation of the transcriptional activity of RRM1. Interacts directly with THAP3 (via its HBM). Interacts (via the Kelch-repeat domain) with THAP1 (via the HBM); the interaction recruits HCHC1 to the RRM1. Interacts with THAP7 and THAP11 (via the HMB). Interacts directly with OGT; the interaction, which requires the HCFC1 cleavage site domain, glycosylates and promotes the proteolytic processing of HCFC1, retains OGT in the nucleus and impacts the expression of herpes simplex virus immediate early viral genes. Component of the SET1 complex, at least composed of the catalytic subunit (SETD1A or SETD1B), WDR5, WDR82, RBBP5, ASH2L, CXXC1, HCFC1 and DPY30. Component of the NSL complex at least composed of MOF/KAT8, KANSL1, KANSL2, KANSL3, MCRS1, PHF20, OGT1/OGT, WDR5 and HCFC1. Component of a complex at least composed of ZNF335, HCFC1, CCAR2, EMSY, MKI67, RBBP5, ASH2L and WDR5; the complex is formed as a result of interactions between components of a nuclear receptor-mediated transcription complex and a histone methylation complex. Within the complex interacts with ZNF335. Interacts with TET2 and TET3. Interacts with HCFC1R1. Interacts with THAP11. Interacts (via Kelch domain) with KMT2E/MLL5 isoform 3 (via HBM motif). Interacts with E2F1. Accessory scaffold component of the polycomb repressive deubiquitinase (PR-DUB) complex, at least composed of BAP1, one of ASXL1, ASXL2 or (probably) ASXL3 and one of MBD5 or MBD6; the PR-DUB core associates with a number of accessory proteins, including FOXK1, FOXK2, KDM1B, HCFC1, YY1 and OGT. Interacts with YY1 (via Gly-rich region); the interaction is direct. Interacts with BAP1 (via HBM-like motif). Post-translationally, proteolytically cleaved at one or several PPCE--THET sites within the HCF repeats. Further cleavage of the primary N- and C-terminal chains results in a 'trimming' and accumulation of the smaller chains. Cleavage is promoted by O-glycosylation. In terms of processing, O-glycosylated. GlcNAcylation by OGT promotes proteolytic processing. Ubiquitinated. Lys-1818 and Lys-1819 are ubiquitinated both via 'Lys-48'- and 'Lys-63'-linked polyubiquitin chains. BAP1 mediated deubiquitination of 'Lys-48'-linked polyubiquitin chains; deubiquitination by BAP1 does not seem to stabilize the protein.

The protein localises to the cytoplasm. It localises to the nucleus. Functionally, transcriptional coregulator. Serves as a scaffold protein, bridging interactions between transcription factors, including THAP11 and ZNF143, and transcriptional coregulators. Involved in control of the cell cycle. Also antagonizes transactivation by ZBTB17 and GABP2; represses ZBTB17 activation of the p15(INK4b) promoter and inhibits its ability to recruit p300. Coactivator for EGR2 and GABP2. Tethers the chromatin modifying Set1/Ash2 histone H3 'Lys-4' methyltransferase (H3K4me) and Sin3 histone deacetylase (HDAC) complexes (involved in the activation and repression of transcription, respectively) together. Component of a THAP1/THAP3-HCFC1-OGT complex that is required for the regulation of the transcriptional activity of RRM1. As part of the NSL complex it may be involved in acetylation of nucleosomal histone H4 on several lysine residues. Recruits KMT2E/MLL5 to E2F1 responsive promoters promoting transcriptional activation and thereby facilitates G1 to S phase transition. Modulates expression of homeobox protein PDX1, perhaps acting in concert with transcription factor E2F1, thereby regulating pancreatic beta-cell growth and glucose-stimulated insulin secretion. May negatively modulate transcriptional activity of FOXO3. This chain is Host cell factor 1, found in Rattus norvegicus (Rat).